The primary structure comprises 228 residues: Cutinase (228 aa).

The N-terminal stretch at 1–16 (MKFLSIISLAVSLVAA) is a signal peptide. Cys49 and Cys129 are joined by a disulfide. The active-site Nucleophile is Ser140. Cys191 and Cys198 form a disulfide bridge. Residue Asp195 is part of the active site. The active-site Proton donor/acceptor is the His208.

Belongs to the cutinase family. Post-translationally, the 2 disulfide bonds play a critical role in holding the catalytic residues in juxta-position; reduction of the disulfide bridges results in the complete inactivation of the enzyme.

The protein localises to the secreted. It catalyses the reaction cutin + H2O = cutin monomers.. Its activity is regulated as follows. Partially inhibited by berberine; higher inhibitory effects are observed with longer chain polyester substrates. In terms of biological role, catalyzes the hydrolysis of complex carboxylic polyesters found in the cell wall of plants. Degrades cutin, a macromolecule that forms the structure of the plant cuticle. Allows pathogenic fungi to penetrate through the cuticular barrier into the host plant during the initial stage of fungal infection. The polypeptide is Cutinase (CUTA) (Colletotrichum truncatum (Anthracnose fungus)).